Here is a 504-residue protein sequence, read N- to C-terminus: Cobyric acid synthase (504 aa).

A GATase cobBQ-type domain is found at 251-448 (DITIAIVQLP…LHGLFDSDAF (198 aa)). The active-site Nucleophile is C332. The active site involves H440.

The protein belongs to the CobB/CobQ family. CobQ subfamily.

Its pathway is cofactor biosynthesis; adenosylcobalamin biosynthesis. In terms of biological role, catalyzes amidations at positions B, D, E, and G on adenosylcobyrinic A,C-diamide. NH(2) groups are provided by glutamine, and one molecule of ATP is hydrogenolyzed for each amidation. In Salmonella gallinarum (strain 287/91 / NCTC 13346), this protein is Cobyric acid synthase.